The primary structure comprises 386 residues: Patatin group M-2 (386 aa).

An N-terminal signal peptide occupies residues methionine 1–alanine 23. Residues leucine 32–leucine 229 enclose the PNPLA domain. The GXGXXG signature appears at glycine 36–glycine 41. Residues glycine 75–glycine 79 carry the GXSXG motif. The Nucleophile role is filled by serine 77. N-linked (GlcNAc...) asparagine glycosylation is present at asparagine 115. The Proton acceptor role is filled by aspartate 215. The short motif at aspartate 215–glycine 217 is the DGA/G element. Positions glutamate 321 to alanine 384 form a coiled coil.

It belongs to the patatin family. In terms of tissue distribution, tuber.

Its subcellular location is the vacuole. In terms of biological role, probable lipolytic acyl hydrolase (LAH), an activity which is thought to be involved in the response of tubers to pathogens. This chain is Patatin group M-2, found in Solanum tuberosum (Potato).